A 258-amino-acid polypeptide reads, in one-letter code: UPF0246 protein YaaA (258 aa).

It belongs to the UPF0246 family.

The sequence is that of UPF0246 protein YaaA from Escherichia coli O8 (strain IAI1).